The chain runs to 620 residues: Preterminal protein (620 aa).

Positions 356 to 365 (RLPMRRRRRR) match the Nuclear localization signal motif. Ser-545 bears the O-(5'-phospho-DNA)-serine mark.

Belongs to the adenoviridae terminal protein family. As to quaternary structure, heterodimer with the polymerase; this heterodimer binds to bp 9 to 18 of the genome. Interacts with host POU2F1; POU2F1 binds to the auxiliary sequences in the inverted terminal repeats and tethers the pTP-POL heterodimer to the origin DNA thereby participating in the assembly of the pre-initiation complex (POL-TP-DBP-NFIA-POU2F1). In terms of processing, preterminal protein is used to replicate viral genome, upon genomic encapsidation it is processed first into iTP and finally into TP by adenovirus protease.

It localises to the host nucleus matrix. Protein covalently bound to the viral DNA that acts as a primer for viral genomic replication by DNA strand displacement. Assembles on the viral origin of replication in an initiation complex with viral polymerase, DBP, host NFIA and host POU2F1/OCT1. During initiation, the polymerase covalently couples the first dCTP with Ser-580 of pTP. The terminal protein stimulates the template activity over 20 fold compared to protein-free templates. Neo-synthesized viral genomes are linked to two preterminal proteins, one for each 5' end. These new genomes are encapsidated in the nucleus, and during capsid maturation by viral protease, preterminal protein is first cleaved into intermediary (iTP), then into mature TP. May play a role in host nuclear matrix localization of genomic DNA. This Bovine adenovirus 2 (BAdV-2) protein is Preterminal protein.